We begin with the raw amino-acid sequence, 437 residues long: 3-phosphoshikimate 1-carboxyvinyltransferase (437 aa).

3-phosphoshikimate-binding residues include K22, S23, and R27. Residue K22 coordinates phosphoenolpyruvate. Phosphoenolpyruvate contacts are provided by G94 and R122. 3-phosphoshikimate contacts are provided by S167, Q169, D314, and K341. Q169 provides a ligand contact to phosphoenolpyruvate. The active-site Proton acceptor is the D314. Residues R345 and R389 each coordinate phosphoenolpyruvate.

This sequence belongs to the EPSP synthase family. Monomer.

Its subcellular location is the cytoplasm. It catalyses the reaction 3-phosphoshikimate + phosphoenolpyruvate = 5-O-(1-carboxyvinyl)-3-phosphoshikimate + phosphate. It participates in metabolic intermediate biosynthesis; chorismate biosynthesis; chorismate from D-erythrose 4-phosphate and phosphoenolpyruvate: step 6/7. Its function is as follows. Catalyzes the transfer of the enolpyruvyl moiety of phosphoenolpyruvate (PEP) to the 5-hydroxyl of shikimate-3-phosphate (S3P) to produce enolpyruvyl shikimate-3-phosphate and inorganic phosphate. This chain is 3-phosphoshikimate 1-carboxyvinyltransferase, found in Oenococcus oeni (strain ATCC BAA-331 / PSU-1).